Reading from the N-terminus, the 662-residue chain is DNA topoisomerase 4 subunit B (662 aa).

Residues tyrosine 20, asparagine 60, aspartate 87, 129–135 (GLHGVGI), and lysine 359 contribute to the ATP site. Residues 439-553 (TELFIVEGDS…EGHLYLAKPP (115 aa)) enclose the Toprim domain. Residues glutamate 445, aspartate 518, and aspartate 520 each contribute to the Mg(2+) site.

The protein belongs to the type II topoisomerase family. ParE type 1 subfamily. As to quaternary structure, heterotetramer composed of ParC and ParE. It depends on Mg(2+) as a cofactor. The cofactor is Mn(2+). Requires Ca(2+) as cofactor.

The enzyme catalyses ATP-dependent breakage, passage and rejoining of double-stranded DNA.. Its function is as follows. Topoisomerase IV is essential for chromosome segregation. It relaxes supercoiled DNA. Performs the decatenation events required during the replication of a circular DNA molecule. In Rickettsia conorii (strain ATCC VR-613 / Malish 7), this protein is DNA topoisomerase 4 subunit B.